The following is a 204-amino-acid chain: Peptide deformylase (204 aa).

Residues Cys-131 and His-174 each coordinate Fe cation. The active site involves Glu-175. His-178 is a Fe cation binding site.

Belongs to the polypeptide deformylase family. Fe(2+) serves as cofactor.

It catalyses the reaction N-terminal N-formyl-L-methionyl-[peptide] + H2O = N-terminal L-methionyl-[peptide] + formate. In terms of biological role, removes the formyl group from the N-terminal Met of newly synthesized proteins. Requires at least a dipeptide for an efficient rate of reaction. N-terminal L-methionine is a prerequisite for activity but the enzyme has broad specificity at other positions. The protein is Peptide deformylase of Streptococcus pyogenes serotype M1.